The primary structure comprises 253 residues: MMTEPILQIRDLSVYYNQKKTLKDVSLDLYPNEITALIGPSGSGKSTLLRSINRMNDLNPEVTITGSIVYNGHNIYSPRTDTVDLRKEIGMVFQQPNPFPMSIYENVVYGLRLKGIRDKSILDHAVESSLKGASIWNEVKDRLHDSAVGLSGGQQQRVCIARVLATSPRIILLDEPTSALDPISAGKIEETLLLLKKDYTLAIVTRSMQQASRLSDRTGFFLEGDLLECGPTKAMFMNPKRKETEDYISGKFG.

In terms of domain architecture, ABC transporter spans Leu-7–Ile-248. Gly-39 to Ser-46 provides a ligand contact to ATP.

The protein belongs to the ABC transporter superfamily. Phosphate importer (TC 3.A.1.7) family. In terms of assembly, the complex is composed of two ATP-binding proteins (PstB), two transmembrane proteins (PstC and PstA) and a solute-binding protein (PstS).

It localises to the cell membrane. It carries out the reaction phosphate(out) + ATP + H2O = ADP + 2 phosphate(in) + H(+). In terms of biological role, part of the ABC transporter complex PstSACB involved in phosphate import. Responsible for energy coupling to the transport system. The sequence is that of Phosphate import ATP-binding protein PstB 1 from Streptococcus pyogenes serotype M2 (strain MGAS10270).